A 390-amino-acid polypeptide reads, in one-letter code: Dual-specificity RNA methyltransferase RlmN (390 aa).

Catalysis depends on E126, which acts as the Proton acceptor. Residues 134–374 form the Radical SAM core domain; sequence TEDRGAVCLS…APVRTPRGQD (241 aa). C141 and C379 are joined by a disulfide. Positions 148, 152, and 155 each coordinate [4Fe-4S] cluster. S-adenosyl-L-methionine is bound by residues 205–206, S237, 259–261, and N336; these read GE and SLH. C379 serves as the catalytic S-methylcysteine intermediate.

It belongs to the radical SAM superfamily. RlmN family. Requires [4Fe-4S] cluster as cofactor.

It localises to the cytoplasm. The catalysed reaction is adenosine(2503) in 23S rRNA + 2 reduced [2Fe-2S]-[ferredoxin] + 2 S-adenosyl-L-methionine = 2-methyladenosine(2503) in 23S rRNA + 5'-deoxyadenosine + L-methionine + 2 oxidized [2Fe-2S]-[ferredoxin] + S-adenosyl-L-homocysteine. It carries out the reaction adenosine(37) in tRNA + 2 reduced [2Fe-2S]-[ferredoxin] + 2 S-adenosyl-L-methionine = 2-methyladenosine(37) in tRNA + 5'-deoxyadenosine + L-methionine + 2 oxidized [2Fe-2S]-[ferredoxin] + S-adenosyl-L-homocysteine. In terms of biological role, specifically methylates position 2 of adenine 2503 in 23S rRNA and position 2 of adenine 37 in tRNAs. m2A2503 modification seems to play a crucial role in the proofreading step occurring at the peptidyl transferase center and thus would serve to optimize ribosomal fidelity. This Acidiphilium cryptum (strain JF-5) protein is Dual-specificity RNA methyltransferase RlmN.